Reading from the N-terminus, the 245-residue chain is Methyltransferase-like protein 27 (245 aa).

This Homo sapiens (Human) protein is Methyltransferase-like protein 27.